Consider the following 34-residue polypeptide: Photosystem II reaction center protein Psb30 (34 aa).

Residues 6 to 26 traverse the membrane as a helical segment; it reads VVFQLMALFFVLAAGPAVVVL.

It belongs to the Psb30/Ycf12 family. In terms of assembly, PSII is composed of 1 copy each of membrane proteins PsbA, PsbB, PsbC, PsbD, PsbE, PsbF, PsbH, PsbI, PsbJ, PsbK, PsbL, PsbM, PsbT, PsbX, PsbY, PsbZ, Psb30/Ycf12, peripheral proteins of the oxygen-evolving complex and a large number of cofactors. It forms dimeric complexes.

The protein localises to the plastid. Its subcellular location is the chloroplast thylakoid membrane. In terms of biological role, a core subunit of photosystem II (PSII), probably helps stabilize the reaction center. The protein is Photosystem II reaction center protein Psb30 of Stigeoclonium helveticum (Green alga).